The primary structure comprises 131 residues: Two-component response regulator ORR3 (131 aa).

The Response regulatory domain occupies 12–129 (HVLAVDDSIV…DVSRLCNRVI (118 aa)). 4-aspartylphosphate is present on Asp62.

Belongs to the ARR family. Type-A subfamily. Two-component system major event consists of a His-to-Asp phosphorelay between a sensor histidine kinase (HK) and a response regulator (RR). In plants, the His-to-Asp phosphorelay involves an additional intermediate named Histidine-containing phosphotransfer protein (HPt). This multistep phosphorelay consists of a His-Asp-His-Asp sequential transfer of a phosphate group between first a His and an Asp of the HK protein, followed by the transfer to a conserved His of the HPt protein and finally the transfer to an Asp in the receiver domain of the RR protein. In terms of tissue distribution, expressed in roots, mature leaves and flowers, and at low levels in shoots.

Functions as a response regulator involved in His-to-Asp phosphorelay signal transduction system. Phosphorylation of the Asp residue in the receiver domain activates the ability of the protein to promote the transcription of target genes. Type-A response regulators seem to act as negative regulators of the cytokinin signaling. The chain is Two-component response regulator ORR3 from Oryza sativa subsp. indica (Rice).